The chain runs to 357 residues: Peptide chain release factor 1 (357 aa).

At Gln-236 the chain carries N5-methylglutamine. Residues 283–309 (ERRKKDQERANNRREQIGSGDRSERIR) are compositionally biased toward basic and acidic residues. The tract at residues 283–313 (ERRKKDQERANNRREQIGSGDRSERIRTYNF) is disordered.

This sequence belongs to the prokaryotic/mitochondrial release factor family. Post-translationally, methylated by PrmC. Methylation increases the termination efficiency of RF1.

Its subcellular location is the cytoplasm. Peptide chain release factor 1 directs the termination of translation in response to the peptide chain termination codons UAG and UAA. This is Peptide chain release factor 1 from Rickettsia bellii (strain OSU 85-389).